Consider the following 574-residue polypeptide: Septation ring formation regulator EzrA (574 aa).

Over M1–L7 the chain is Extracellular. A helical membrane pass occupies residues L8–I26. Residues R27–F574 lie on the Cytoplasmic side of the membrane. Coiled coils occupy residues V104–N141, L275–Y343, and D473–S525.

Belongs to the EzrA family.

Its subcellular location is the cell membrane. Negative regulator of FtsZ ring formation; modulates the frequency and position of FtsZ ring formation. Inhibits FtsZ ring formation at polar sites. Interacts either with FtsZ or with one of its binding partners to promote depolymerization. The protein is Septation ring formation regulator EzrA of Streptococcus agalactiae serotype III (strain NEM316).